A 401-amino-acid polypeptide reads, in one-letter code: N-acetyllactosaminide beta-1,6-N-acetylglucosaminyl-transferase (401 aa).

The Cytoplasmic segment spans residues 1 to 7; sequence MPPSVRY. Residues 8–28 traverse the membrane as a helical; Signal-anchor for type II membrane protein segment; it reads FFIVSVTTVIVFIVLYVLSFG. The Lumenal segment spans residues 29-401; the sequence is GDQSYQKLNI…EIAIQPSWYF (373 aa). Residues asparagine 37, asparagine 255, asparagine 315, and asparagine 389 are each glycosylated (N-linked (GlcNAc...) asparagine).

The protein belongs to the glycosyltransferase 14 family.

It localises to the golgi apparatus membrane. The enzyme catalyses a beta-D-Gal-(1-&gt;4)-beta-D-GlcNAc-(1-&gt;3)-beta-D-Gal-(1-&gt;4)-beta-D-GlcNAc derivative + UDP-N-acetyl-alpha-D-glucosamine = a beta-D-Gal-(1-&gt;4)-beta-D-GlcNAc-(1-&gt;3)-[beta-D-GlcNAc-(1-&gt;6)]-beta-D-Gal-(1-&gt;4)-N-acetyl-beta-D-glucosaminyl derivative + UDP + H(+). It functions in the pathway protein modification; protein glycosylation. Its function is as follows. Branching enzyme that converts linear into branched poly-N-acetyllactosaminoglycans. Introduces the blood group I antigen during embryonic development. It is closely associated with the development and maturation of erythroid cells. In Mus musculus (Mouse), this protein is N-acetyllactosaminide beta-1,6-N-acetylglucosaminyl-transferase (Gcnt2).